Consider the following 142-residue polypeptide: Hemoglobin subunit alpha-2 (142 aa).

The 141-residue stretch at 2 to 142 (LLTADDKKHI…VSSVLTSKYR (141 aa)) folds into the Globin domain. O2 is bound at residue histidine 59. Histidine 88 lines the heme b pocket.

Belongs to the globin family. As to quaternary structure, heterotetramer of two alpha chains and two beta chains. Red blood cells.

Involved in oxygen transport from the lung to the various peripheral tissues. The polypeptide is Hemoglobin subunit alpha-2 (hba2) (Xenopus borealis (Kenyan clawed frog)).